The sequence spans 348 residues: Phenylalanine--tRNA ligase alpha subunit (348 aa).

Glu-262 is a binding site for Mg(2+).

It belongs to the class-II aminoacyl-tRNA synthetase family. Phe-tRNA synthetase alpha subunit type 1 subfamily. Tetramer of two alpha and two beta subunits. The cofactor is Mg(2+).

It localises to the cytoplasm. The catalysed reaction is tRNA(Phe) + L-phenylalanine + ATP = L-phenylalanyl-tRNA(Phe) + AMP + diphosphate + H(+). The chain is Phenylalanine--tRNA ligase alpha subunit from Streptococcus pneumoniae serotype 2 (strain D39 / NCTC 7466).